We begin with the raw amino-acid sequence, 293 residues long: NAD kinase (293 aa).

The active-site Proton acceptor is the Asp-72. Residues 72-73, 146-147, Arg-157, Lys-174, Asp-176, 187-192, and Gln-247 contribute to the NAD(+) site; these read DG, ND, and TAYALS.

This sequence belongs to the NAD kinase family. It depends on a divalent metal cation as a cofactor.

It is found in the cytoplasm. The catalysed reaction is NAD(+) + ATP = ADP + NADP(+) + H(+). Its function is as follows. Involved in the regulation of the intracellular balance of NAD and NADP, and is a key enzyme in the biosynthesis of NADP. Catalyzes specifically the phosphorylation on 2'-hydroxyl of the adenosine moiety of NAD to yield NADP. This is NAD kinase from Marinomonas sp. (strain MWYL1).